A 65-amino-acid polypeptide reads, in one-letter code: Large ribosomal subunit protein uL29 (65 aa).

It belongs to the universal ribosomal protein uL29 family.

This Mycoplasmopsis pulmonis (strain UAB CTIP) (Mycoplasma pulmonis) protein is Large ribosomal subunit protein uL29.